A 212-amino-acid chain; its full sequence is Peptide methionine sulfoxide reductase MsrA (212 aa).

C52 is a catalytic residue.

This sequence belongs to the MsrA Met sulfoxide reductase family.

The catalysed reaction is L-methionyl-[protein] + [thioredoxin]-disulfide + H2O = L-methionyl-(S)-S-oxide-[protein] + [thioredoxin]-dithiol. It carries out the reaction [thioredoxin]-disulfide + L-methionine + H2O = L-methionine (S)-S-oxide + [thioredoxin]-dithiol. Has an important function as a repair enzyme for proteins that have been inactivated by oxidation. Catalyzes the reversible oxidation-reduction of methionine sulfoxide in proteins to methionine. The polypeptide is Peptide methionine sulfoxide reductase MsrA (Escherichia fergusonii (strain ATCC 35469 / DSM 13698 / CCUG 18766 / IAM 14443 / JCM 21226 / LMG 7866 / NBRC 102419 / NCTC 12128 / CDC 0568-73)).